Consider the following 146-residue polypeptide: Large ribosomal subunit protein uL15 (146 aa).

The disordered stretch occupies residues Met-1–Thr-58. Residues Arg-21–Ser-31 show a composition bias toward gly residues.

Belongs to the universal ribosomal protein uL15 family. Part of the 50S ribosomal subunit.

Its function is as follows. Binds to the 23S rRNA. This is Large ribosomal subunit protein uL15 from Moorella thermoacetica (strain ATCC 39073 / JCM 9320).